We begin with the raw amino-acid sequence, 134 residues long: Small ribosomal subunit protein uS8c (134 aa).

The protein belongs to the universal ribosomal protein uS8 family. Part of the 30S ribosomal subunit.

It localises to the plastid. The protein localises to the chloroplast. Its function is as follows. One of the primary rRNA binding proteins, it binds directly to 16S rRNA central domain where it helps coordinate assembly of the platform of the 30S subunit. This chain is Small ribosomal subunit protein uS8c (rps8), found in Helianthus annuus (Common sunflower).